The chain runs to 61 residues: MAKKSMIAKQKRTPKYAVQAYTRCERCGRPHSVIRKFKLCRICFRELAYKGQIPGVKKASW.

Positions 24, 27, 40, and 43 each coordinate Zn(2+).

It belongs to the universal ribosomal protein uS14 family. Zinc-binding uS14 subfamily. As to quaternary structure, part of the 30S ribosomal subunit. Contacts proteins S3 and S10. It depends on Zn(2+) as a cofactor.

In terms of biological role, binds 16S rRNA, required for the assembly of 30S particles and may also be responsible for determining the conformation of the 16S rRNA at the A site. This Listeria welshimeri serovar 6b (strain ATCC 35897 / DSM 20650 / CCUG 15529 / CIP 8149 / NCTC 11857 / SLCC 5334 / V8) protein is Small ribosomal subunit protein uS14B.